We begin with the raw amino-acid sequence, 440 residues long: NADH-quinone oxidoreductase subunit D 2 (440 aa).

Belongs to the complex I 49 kDa subunit family. In terms of assembly, NDH-1 is composed of 14 different subunits. Subunits NuoB, C, D, E, F, and G constitute the peripheral sector of the complex.

The protein localises to the cell membrane. It catalyses the reaction a quinone + NADH + 5 H(+)(in) = a quinol + NAD(+) + 4 H(+)(out). Its function is as follows. NDH-1 shuttles electrons from NADH, via FMN and iron-sulfur (Fe-S) centers, to quinones in the respiratory chain. The immediate electron acceptor for the enzyme in this species is believed to be a menaquinone. Couples the redox reaction to proton translocation (for every two electrons transferred, four hydrogen ions are translocated across the cytoplasmic membrane), and thus conserves the redox energy in a proton gradient. This Streptomyces coelicolor (strain ATCC BAA-471 / A3(2) / M145) protein is NADH-quinone oxidoreductase subunit D 2.